The chain runs to 478 residues: Cytochrome c-552 (478 aa).

Residues 1-26 (MTRIKINARRIFSLLIPFFFFTSVHA) form the signal peptide. Residue His-94 participates in heme c binding. Cys-122, Cys-125, and Lys-126 together coordinate heme. Residues Cys-160, Cys-163, His-164, Cys-209, Cys-212, and His-213 each contribute to the heme c site. Residues Glu-215, Tyr-216, Lys-261, and Gln-263 each coordinate Ca(2+). Substrate is bound at residue Tyr-216. His-264 contacts substrate. 9 residues coordinate heme c: His-275, Cys-282, Cys-285, His-286, His-301, Cys-314, Cys-317, His-318, and His-393.

This sequence belongs to the cytochrome c-552 family. It depends on Ca(2+) as a cofactor. Requires heme c as cofactor.

It is found in the periplasm. It carries out the reaction 6 Fe(III)-[cytochrome c] + NH4(+) + 2 H2O = 6 Fe(II)-[cytochrome c] + nitrite + 8 H(+). It functions in the pathway nitrogen metabolism; nitrate reduction (assimilation). In terms of biological role, catalyzes the reduction of nitrite to ammonia, consuming six electrons in the process. This is Cytochrome c-552 from Escherichia coli O17:K52:H18 (strain UMN026 / ExPEC).